Here is a 489-residue protein sequence, read N- to C-terminus: 3-octaprenyl-4-hydroxybenzoate carboxy-lyase (489 aa).

Position 172 (N172) interacts with Mn(2+). Prenylated FMN contacts are provided by residues 175–177, 189–191, and 194–195; these read IYR, RWL, and RG. E238 serves as a coordination point for Mn(2+). D287 functions as the Proton donor in the catalytic mechanism.

This sequence belongs to the UbiD family. Homohexamer. Requires prenylated FMN as cofactor. Mn(2+) serves as cofactor.

The protein localises to the cell membrane. It carries out the reaction a 4-hydroxy-3-(all-trans-polyprenyl)benzoate + H(+) = a 2-(all-trans-polyprenyl)phenol + CO2. Its pathway is cofactor biosynthesis; ubiquinone biosynthesis. In terms of biological role, catalyzes the decarboxylation of 3-octaprenyl-4-hydroxy benzoate to 2-octaprenylphenol, an intermediate step in ubiquinone biosynthesis. This chain is 3-octaprenyl-4-hydroxybenzoate carboxy-lyase, found in Aeromonas hydrophila subsp. hydrophila (strain ATCC 7966 / DSM 30187 / BCRC 13018 / CCUG 14551 / JCM 1027 / KCTC 2358 / NCIMB 9240 / NCTC 8049).